The following is a 232-amino-acid chain: Phosphatidylserine decarboxylase proenzyme (232 aa).

S190 serves as the catalytic Schiff-base intermediate with substrate; via pyruvic acid. Pyruvic acid (Ser); by autocatalysis is present on S190.

It belongs to the phosphatidylserine decarboxylase family. PSD-A subfamily. Heterodimer of a large membrane-associated beta subunit and a small pyruvoyl-containing alpha subunit. Pyruvate is required as a cofactor. Is synthesized initially as an inactive proenzyme. Formation of the active enzyme involves a self-maturation process in which the active site pyruvoyl group is generated from an internal serine residue via an autocatalytic post-translational modification. Two non-identical subunits are generated from the proenzyme in this reaction, and the pyruvate is formed at the N-terminus of the alpha chain, which is derived from the carboxyl end of the proenzyme. The post-translation cleavage follows an unusual pathway, termed non-hydrolytic serinolysis, in which the side chain hydroxyl group of the serine supplies its oxygen atom to form the C-terminus of the beta chain, while the remainder of the serine residue undergoes an oxidative deamination to produce ammonia and the pyruvoyl prosthetic group on the alpha chain.

The protein localises to the cell membrane. It catalyses the reaction a 1,2-diacyl-sn-glycero-3-phospho-L-serine + H(+) = a 1,2-diacyl-sn-glycero-3-phosphoethanolamine + CO2. Its pathway is phospholipid metabolism; phosphatidylethanolamine biosynthesis; phosphatidylethanolamine from CDP-diacylglycerol: step 2/2. Its function is as follows. Catalyzes the formation of phosphatidylethanolamine (PtdEtn) from phosphatidylserine (PtdSer). The protein is Phosphatidylserine decarboxylase proenzyme of Bartonella henselae (strain ATCC 49882 / DSM 28221 / CCUG 30454 / Houston 1) (Rochalimaea henselae).